The following is a 118-amino-acid chain: Large ribosomal subunit protein uL22c (118 aa).

Belongs to the universal ribosomal protein uL22 family. Part of the 50S ribosomal subunit.

The protein localises to the plastid. Its subcellular location is the chloroplast. Functionally, this protein binds specifically to 23S rRNA. The globular domain of the protein is located near the polypeptide exit tunnel on the outside of the subunit, while an extended beta-hairpin is found that lines the wall of the exit tunnel in the center of the 70S ribosome. The polypeptide is Large ribosomal subunit protein uL22c (rpl22) (Rhodomonas salina (Cryptomonas salina)).